The primary structure comprises 236 residues: Small ribosomal subunit protein uS2c (236 aa).

It belongs to the universal ribosomal protein uS2 family.

It localises to the plastid. It is found in the chloroplast. The protein is Small ribosomal subunit protein uS2c (rps2) of Lolium perenne (Perennial ryegrass).